A 443-amino-acid polypeptide reads, in one-letter code: Ribosomal protein uS12 methylthiotransferase RimO (443 aa).

The region spanning 5 to 115 (PNIGFISLGC…VMKHVHKYVP (111 aa)) is the MTTase N-terminal domain. [4Fe-4S] cluster is bound by residues C14, C50, C79, C147, C151, and C154. Positions 133–374 (LTPKHYAYLK…MQLQQKISAE (242 aa)) constitute a Radical SAM core domain. Positions 377 to 443 (RQKIGRTLSV…ADEYDLWGEI (67 aa)) constitute a TRAM domain.

Belongs to the methylthiotransferase family. RimO subfamily. It depends on [4Fe-4S] cluster as a cofactor.

The protein resides in the cytoplasm. The enzyme catalyses L-aspartate(89)-[ribosomal protein uS12]-hydrogen + (sulfur carrier)-SH + AH2 + 2 S-adenosyl-L-methionine = 3-methylsulfanyl-L-aspartate(89)-[ribosomal protein uS12]-hydrogen + (sulfur carrier)-H + 5'-deoxyadenosine + L-methionine + A + S-adenosyl-L-homocysteine + 2 H(+). Its function is as follows. Catalyzes the methylthiolation of an aspartic acid residue of ribosomal protein uS12. This is Ribosomal protein uS12 methylthiotransferase RimO from Histophilus somni (strain 2336) (Haemophilus somnus).